Here is a 249-residue protein sequence, read N- to C-terminus: NAD(P)H-quinone oxidoreductase subunit T, chloroplastic (249 aa).

The N-terminal 45 residues, 1–45, are a transit peptide targeting the chloroplast; sequence MAYATSTYARTSCIILPKIQNGAHFTDDTKAFRRITARRVTRIYA. A disordered region spans residues 44–84; that stretch reads YASQGPTKPSKPSPGVDTRIHWESPDEGWIGGRSDPAKSVD. Positions 106–172 constitute a J domain; that stretch reads SHYQFLGVST…ETRRFYDWTL (67 aa). Residues 224 to 244 form a helical membrane-spanning segment; sequence LTFDILIVLFAVCCIAFVIVF.

Part of the chloroplast NDH complex, composed of a mixture of chloroplast and nucleus encoded subunits. Component of the electron donor-binding subcomplex, at least composed of NDHS, NDHT and NDHU.

The protein localises to the plastid. Its subcellular location is the chloroplast thylakoid membrane. It catalyses the reaction a plastoquinone + NADH + (n+1) H(+)(in) = a plastoquinol + NAD(+) + n H(+)(out). The enzyme catalyses a plastoquinone + NADPH + (n+1) H(+)(in) = a plastoquinol + NADP(+) + n H(+)(out). In terms of biological role, NDH shuttles electrons from NAD(P)H:plastoquinone, via FMN and iron-sulfur (Fe-S) centers, to quinones in the photosynthetic chain and possibly in a chloroplast respiratory chain. The immediate electron acceptor for the enzyme in this species is believed to be plastoquinone. Couples the redox reaction to proton translocation, and thus conserves the redox energy in a proton gradient. Required for the accumulation of both the NDH subcomplex A and NDHS. This is NAD(P)H-quinone oxidoreductase subunit T, chloroplastic from Arabidopsis thaliana (Mouse-ear cress).